A 433-amino-acid chain; its full sequence is Tol-Pal system protein TolB (433 aa).

The first 26 residues, 1–26, serve as a signal peptide directing secretion; that stretch reads MSLMTKLGFRALVASCLIAAGGAAHA.

The protein belongs to the TolB family. As to quaternary structure, the Tol-Pal system is composed of five core proteins: the inner membrane proteins TolA, TolQ and TolR, the periplasmic protein TolB and the outer membrane protein Pal. They form a network linking the inner and outer membranes and the peptidoglycan layer.

It is found in the periplasm. Part of the Tol-Pal system, which plays a role in outer membrane invagination during cell division and is important for maintaining outer membrane integrity. This is Tol-Pal system protein TolB from Burkholderia pseudomallei (strain 1710b).